A 149-amino-acid polypeptide reads, in one-letter code: 6,7-dimethyl-8-ribityllumazine synthase (149 aa).

5-amino-6-(D-ribitylamino)uracil is bound by residues phenylalanine 22, 56-58 (ALE), and 80-82 (AVI). Residue 85 to 86 (ET) participates in (2S)-2-hydroxy-3-oxobutyl phosphate binding. The Proton donor role is filled by histidine 88. Asparagine 113 contacts 5-amino-6-(D-ribitylamino)uracil. A (2S)-2-hydroxy-3-oxobutyl phosphate-binding site is contributed by arginine 127.

The protein belongs to the DMRL synthase family.

The catalysed reaction is (2S)-2-hydroxy-3-oxobutyl phosphate + 5-amino-6-(D-ribitylamino)uracil = 6,7-dimethyl-8-(1-D-ribityl)lumazine + phosphate + 2 H2O + H(+). It functions in the pathway cofactor biosynthesis; riboflavin biosynthesis; riboflavin from 2-hydroxy-3-oxobutyl phosphate and 5-amino-6-(D-ribitylamino)uracil: step 1/2. In terms of biological role, catalyzes the formation of 6,7-dimethyl-8-ribityllumazine by condensation of 5-amino-6-(D-ribitylamino)uracil with 3,4-dihydroxy-2-butanone 4-phosphate. This is the penultimate step in the biosynthesis of riboflavin. This Methylobacillus flagellatus (strain ATCC 51484 / DSM 6875 / VKM B-1610 / KT) protein is 6,7-dimethyl-8-ribityllumazine synthase.